A 193-amino-acid chain; its full sequence is Peptidyl-tRNA hydrolase (193 aa).

Tyrosine 16 serves as a coordination point for tRNA. The active-site Proton acceptor is histidine 21. Positions 67, 69, and 115 each coordinate tRNA.

The protein belongs to the PTH family. As to quaternary structure, monomer.

It localises to the cytoplasm. The enzyme catalyses an N-acyl-L-alpha-aminoacyl-tRNA + H2O = an N-acyl-L-amino acid + a tRNA + H(+). Functionally, hydrolyzes ribosome-free peptidyl-tRNAs (with 1 or more amino acids incorporated), which drop off the ribosome during protein synthesis, or as a result of ribosome stalling. In terms of biological role, catalyzes the release of premature peptidyl moieties from peptidyl-tRNA molecules trapped in stalled 50S ribosomal subunits, and thus maintains levels of free tRNAs and 50S ribosomes. This chain is Peptidyl-tRNA hydrolase, found in Vesicomyosocius okutanii subsp. Calyptogena okutanii (strain HA).